Reading from the N-terminus, the 115-residue chain is UPF0738 protein SAV1005 (115 aa).

Belongs to the UPF0738 family.

This Staphylococcus aureus (strain Mu50 / ATCC 700699) protein is UPF0738 protein SAV1005.